The primary structure comprises 268 residues: 4-hydroxy-tetrahydrodipicolinate reductase (268 aa).

Residue glycine 7–methionine 12 coordinates NAD(+). An NADP(+)-binding site is contributed by arginine 34. NAD(+) contacts are provided by residues glycine 97–threonine 99 and serine 121–methionine 124. The Proton donor/acceptor role is filled by histidine 155. (S)-2,3,4,5-tetrahydrodipicolinate is bound at residue histidine 156. The active-site Proton donor is the lysine 159. Glycine 165–threonine 166 is a binding site for (S)-2,3,4,5-tetrahydrodipicolinate.

The protein belongs to the DapB family.

It localises to the cytoplasm. It catalyses the reaction (S)-2,3,4,5-tetrahydrodipicolinate + NAD(+) + H2O = (2S,4S)-4-hydroxy-2,3,4,5-tetrahydrodipicolinate + NADH + H(+). The enzyme catalyses (S)-2,3,4,5-tetrahydrodipicolinate + NADP(+) + H2O = (2S,4S)-4-hydroxy-2,3,4,5-tetrahydrodipicolinate + NADPH + H(+). It participates in amino-acid biosynthesis; L-lysine biosynthesis via DAP pathway; (S)-tetrahydrodipicolinate from L-aspartate: step 4/4. Its function is as follows. Catalyzes the conversion of 4-hydroxy-tetrahydrodipicolinate (HTPA) to tetrahydrodipicolinate. This chain is 4-hydroxy-tetrahydrodipicolinate reductase, found in Bartonella bacilliformis (strain ATCC 35685 / KC583 / Herrer 020/F12,63).